A 244-amino-acid polypeptide reads, in one-letter code: Geranylgeranylglyceryl phosphate synthase (244 aa).

Mg(2+)-binding residues include Asp-20 and Ser-49. Residues 169-175 (YLEAGSG), 200-201 (GG), and 222-223 (GT) contribute to the sn-glycerol 1-phosphate site.

This sequence belongs to the GGGP/HepGP synthase family. Group II subfamily. Requires Mg(2+) as cofactor.

The protein localises to the cytoplasm. The catalysed reaction is sn-glycerol 1-phosphate + (2E,6E,10E)-geranylgeranyl diphosphate = sn-3-O-(geranylgeranyl)glycerol 1-phosphate + diphosphate. Its pathway is membrane lipid metabolism; glycerophospholipid metabolism. Prenyltransferase that catalyzes the transfer of the geranylgeranyl moiety of geranylgeranyl diphosphate (GGPP) to the C3 hydroxyl of sn-glycerol-1-phosphate (G1P). This reaction is the first ether-bond-formation step in the biosynthesis of archaeal membrane lipids. In Korarchaeum cryptofilum (strain OPF8), this protein is Geranylgeranylglyceryl phosphate synthase.